Consider the following 332-residue polypeptide: Abl interactor homolog (332 aa).

The stretch at 73–104 forms a coiled coil; the sequence is HITSLLQLQTNEMEKLNIEIQTLTQRVRMIHD. The disordered stretch occupies residues 152 to 332; sequence SDINQNGVPP…NDFPPPPPPM (181 aa). The span at 164–206 shows a compositional bias: low complexity; sequence NHSNSSANLTSSSGHLAASSTSNSSTPSYQSPSYSSQPTISSG. The span at 221-247 shows a compositional bias: pro residues; the sequence is APPPPSLSVPAAPPPPVMNVPPPPPTS. Positions 248-257 are enriched in polar residues; the sequence is QRPSSVNNNA. A compositionally biased stretch (pro residues) spans 277–314; it reads LPPPPSFGLPPPPTLGDDFPPPPPPPVGSYDFPPPPAR.

It belongs to the ABI family. Part of a Scar/WAVE complex containing brk1, scrA, abiA, pirA and napA. Interacts with scrA.

Involved in regulation of actin and microtubule organization. Required for proper cytokinesis. The polypeptide is Abl interactor homolog (abiA) (Dictyostelium discoideum (Social amoeba)).